The chain runs to 449 residues: Glucose-6-phosphate isomerase (449 aa).

The active-site Proton donor is the Glu-291. Residues His-312 and Lys-426 contribute to the active site.

It belongs to the GPI family.

It localises to the cytoplasm. It catalyses the reaction alpha-D-glucose 6-phosphate = beta-D-fructose 6-phosphate. Its pathway is carbohydrate biosynthesis; gluconeogenesis. It functions in the pathway carbohydrate degradation; glycolysis; D-glyceraldehyde 3-phosphate and glycerone phosphate from D-glucose: step 2/4. Its function is as follows. Catalyzes the reversible isomerization of glucose-6-phosphate to fructose-6-phosphate. This chain is Glucose-6-phosphate isomerase, found in Enterococcus faecalis (strain ATCC 700802 / V583).